The chain runs to 67 residues: Protein C' (67 aa).

It belongs to the rhabdoviruses C protein family.

In terms of biological role, seems to stimulates transcription by the viral polymerase. May play a role in viral pathogenesis or transmission by insects vectors. The polypeptide is Protein C' (P) (Vesicular stomatitis Indiana virus (strain 85CLB South America) (VSIV)).